The chain runs to 705 residues: Bifunctional arginine dihydrolase/ornithine cyclodeaminase ArgZ (705 aa).

The tract at residues Cys-10–Val-269 is arginine dihydrolase. L-arginine contacts are provided by Asn-22, Asn-71, Arg-90, Arg-139, His-168, Asp-170, Ala-258, and Cys-264. L-ornithine contacts are provided by Asn-22, Asn-71, Arg-90, Arg-139, and His-168. His-168 acts as the Proton donor/acceptor in catalysis. The L-ornithine site is built by Ala-258 and Cys-264. Cys-264 serves as the catalytic Nucleophile. The tract at residues Ser-285–Leu-695 is ornithine cyclodeaminase. Asn-525, Ala-526, Asp-604, Ser-636, Met-637, Leu-638, His-639, Asp-657, Asp-680, and Val-681 together coordinate NAD(+).

In the N-terminal section; belongs to the DDAH family. This sequence in the C-terminal section; belongs to the AgrE/ArgZ ornithine cyclodeaminase family. Homotetramer. The cofactor is NAD(+).

It catalyses the reaction L-arginine + 2 H2O + 2 H(+) = L-ornithine + 2 NH4(+) + CO2. It carries out the reaction L-ornithine = L-proline + NH4(+). Its activity is regulated as follows. Arginine dihydrolase activity does not require a metal cofactor. Its function is as follows. Bifunctional enzyme involved in a cyanobacterial arginine utilization pathway that enables cellular adaptation to nitrogen fluctuations. Catalyzes the hydrolysis of arginine to ornithine, with the release of ammonia and carbon dioxide. Then, probably catalyzes the conversion of ornithine to proline, with the release of ammonia. Is highly specific for arginine and cannot hydrolyze citrulline, dimethylarginine and other amino acids. In Synechocystis sp. (strain ATCC 27184 / PCC 6803 / Kazusa), this protein is Bifunctional arginine dihydrolase/ornithine cyclodeaminase ArgZ.